A 309-amino-acid chain; its full sequence is Ribonuclease Z (309 aa).

Zn(2+) contacts are provided by His-63, His-65, Asp-67, His-68, His-145, Asp-216, and His-274. The active-site Proton acceptor is Asp-67.

The protein belongs to the RNase Z family. Homodimer. Zn(2+) is required as a cofactor.

It carries out the reaction Endonucleolytic cleavage of RNA, removing extra 3' nucleotides from tRNA precursor, generating 3' termini of tRNAs. A 3'-hydroxy group is left at the tRNA terminus and a 5'-phosphoryl group is left at the trailer molecule.. In terms of biological role, zinc phosphodiesterase, which displays some tRNA 3'-processing endonuclease activity. Probably involved in tRNA maturation, by removing a 3'-trailer from precursor tRNA. The chain is Ribonuclease Z from Streptococcus agalactiae serotype Ia (strain ATCC 27591 / A909 / CDC SS700).